Here is a 300-residue protein sequence, read N- to C-terminus: tRNA dimethylallyltransferase (300 aa).

Residue 9–16 (GPTASGKS) coordinates ATP. Residue 11-16 (TASGKS) participates in substrate binding. The interval 34–37 (DSKQ) is interaction with substrate tRNA.

It belongs to the IPP transferase family. As to quaternary structure, monomer. Mg(2+) is required as a cofactor.

It carries out the reaction adenosine(37) in tRNA + dimethylallyl diphosphate = N(6)-dimethylallyladenosine(37) in tRNA + diphosphate. Functionally, catalyzes the transfer of a dimethylallyl group onto the adenine at position 37 in tRNAs that read codons beginning with uridine, leading to the formation of N6-(dimethylallyl)adenosine (i(6)A). This Ehrlichia ruminantium (strain Welgevonden) protein is tRNA dimethylallyltransferase.